A 154-amino-acid chain; its full sequence is Superoxide dismutase [Cu-Zn] (154 aa).

Cu cation is bound by residues His-47, His-49, and His-64. Cys-58 and Cys-147 are joined by a disulfide. Zn(2+)-binding residues include His-64, His-72, His-81, and Asp-84. His-121 provides a ligand contact to Cu cation. A compositionally biased stretch (basic and acidic residues) spans 125–137; that stretch reads DDLGRSEHPESKK. Positions 125-144 are disordered; that stretch reads DDLGRSEHPESKKTGNAGAR. Position 144 (Arg-144) interacts with substrate.

It belongs to the Cu-Zn superoxide dismutase family. In terms of assembly, homodimer. Cu cation is required as a cofactor. The cofactor is Zn(2+).

It localises to the cytoplasm. The enzyme catalyses 2 superoxide + 2 H(+) = H2O2 + O2. In terms of biological role, destroys radicals which are normally produced within the cells and which are toxic to biological systems. This is Superoxide dismutase [Cu-Zn] (sodC) from Aspergillus oryzae (strain ATCC 42149 / RIB 40) (Yellow koji mold).